Here is a 126-residue protein sequence, read N- to C-terminus: DNA-directed RNA polymerase subunit omega (126 aa).

Belongs to the RNA polymerase subunit omega family. In terms of assembly, the RNAP catalytic core consists of 2 alpha, 1 beta, 1 beta' and 1 omega subunit. When a sigma factor is associated with the core the holoenzyme is formed, which can initiate transcription.

It carries out the reaction RNA(n) + a ribonucleoside 5'-triphosphate = RNA(n+1) + diphosphate. Functionally, promotes RNA polymerase assembly. Latches the N- and C-terminal regions of the beta' subunit thereby facilitating its interaction with the beta and alpha subunits. This is DNA-directed RNA polymerase subunit omega from Paramagnetospirillum magneticum (strain ATCC 700264 / AMB-1) (Magnetospirillum magneticum).